The primary structure comprises 251 residues: Triosephosphate isomerase (251 aa).

9-11 (NWK) contributes to the substrate binding site. The active-site Electrophile is the His95. Glu167 (proton acceptor) is an active-site residue. Substrate is bound by residues Gly173, Ser212, and 233–234 (GG).

Belongs to the triosephosphate isomerase family. In terms of assembly, homodimer.

It localises to the cytoplasm. The catalysed reaction is D-glyceraldehyde 3-phosphate = dihydroxyacetone phosphate. It functions in the pathway carbohydrate biosynthesis; gluconeogenesis. It participates in carbohydrate degradation; glycolysis; D-glyceraldehyde 3-phosphate from glycerone phosphate: step 1/1. Involved in the gluconeogenesis. Catalyzes stereospecifically the conversion of dihydroxyacetone phosphate (DHAP) to D-glyceraldehyde-3-phosphate (G3P). The polypeptide is Triosephosphate isomerase (Pseudomonas syringae pv. tomato (strain ATCC BAA-871 / DC3000)).